The following is a 225-amino-acid chain: AA9 family lytic polysaccharide monooxygenase A (225 aa).

A signal peptide spans 1–17 (MLTTTFALLTAALGVSA). Positions 18 and 85 each coordinate Cu(2+). Cystine bridges form between Cys-55–Cys-173 and Cys-143–Cys-225. The O2 site is built by His-159 and Gln-168. Tyr-170 is a Cu(2+) binding site.

It belongs to the polysaccharide monooxygenase AA9 family. It depends on Cu(2+) as a cofactor.

It is found in the secreted. The catalysed reaction is [(1-&gt;4)-beta-D-glucosyl]n+m + reduced acceptor + O2 = 4-dehydro-beta-D-glucosyl-[(1-&gt;4)-beta-D-glucosyl]n-1 + [(1-&gt;4)-beta-D-glucosyl]m + acceptor + H2O.. Is able to utilize various natural phenolic compounds as reducing agents. Most of these reducing agents are present in plants, either free or as lignin building blocks, such as sinapic acid, or as flavonoids such as catechin and dopamine. Phenolic compounds with 1,2-benzenediol and 1,2,3-benzenetriol moieties yield the highest release of oxidized and non-oxidized glucooligosaccharides from cellulose compared to monophenols or sulfur-containing compounds. Lytic polysaccharide monooxygenase (LPMO) that depolymerizes crystalline and amorphous polysaccharides via the oxidation of scissile alpha- or beta-(1-4)-glycosidic bonds, yielding C1 or C4 oxidation products. Catalysis by LPMOs requires the reduction of the active-site copper from Cu(II) to Cu(I) by a reducing agent and H(2)O(2) or O(2) as a cosubstrate. Shows oxidative cleavage of xylan in addition to cellulose. Shows a strong synergistic effect with endoglucanase I (EGI) with a 16-fold higher release of detected oligosaccharides. The sequence is that of AA9 family lytic polysaccharide monooxygenase A from Thermothelomyces thermophilus (strain ATCC 42464 / BCRC 31852 / DSM 1799) (Sporotrichum thermophile).